The chain runs to 35 residues: Photosystem II reaction center protein M (35 aa).

The helical transmembrane segment at 7–27 (GFLASLLFVLVPSVFLIVLYI) threads the bilayer.

It belongs to the PsbM family. In terms of assembly, PSII is composed of 1 copy each of membrane proteins PsbA, PsbB, PsbC, PsbD, PsbE, PsbF, PsbH, PsbI, PsbJ, PsbK, PsbL, PsbM, PsbT, PsbX, PsbY, PsbZ, Psb30/Ycf12, peripheral proteins PsbO, CyanoQ (PsbQ), PsbU, PsbV and a large number of cofactors. It forms dimeric complexes.

The protein resides in the cellular thylakoid membrane. Functionally, one of the components of the core complex of photosystem II (PSII). PSII is a light-driven water:plastoquinone oxidoreductase that uses light energy to abstract electrons from H(2)O, generating O(2) and a proton gradient subsequently used for ATP formation. It consists of a core antenna complex that captures photons, and an electron transfer chain that converts photonic excitation into a charge separation. This subunit is found at the monomer-monomer interface. The polypeptide is Photosystem II reaction center protein M (Synechococcus elongatus (strain ATCC 33912 / PCC 7942 / FACHB-805) (Anacystis nidulans R2)).